Here is a 46-residue protein sequence, read N- to C-terminus: Elongation factor Tu (46 aa).

A compositionally biased stretch (basic and acidic residues) spans 1–10 (MAKGKFERSK). Residues 1–20 (MAKGKFERSKPHVNVGTIGH) form a disordered region. GTP is bound at residue 19–26 (GHVDHGKT).

It belongs to the GTP-binding elongation factor family. EF-Tu/EF-1A subfamily. As to quaternary structure, monomer.

It localises to the cytoplasm. Its function is as follows. This protein promotes the GTP-dependent binding of aminoacyl-tRNA to the A-site of ribosomes during protein biosynthesis. This Eikenella corrodens protein is Elongation factor Tu (tufA).